The following is a 23-amino-acid chain: Dahlein-4.3 (23 aa).

Expressed by the skin dorsal glands.

It is found in the secreted. Its function is as follows. Has no antimicrobial activity. This Ranoidea dahlii (Dahl's aquatic frog) protein is Dahlein-4.3.